The chain runs to 301 residues: HTH-type transcriptional activator NagR (301 aa).

The 58-residue stretch at 6–63 (IDLNLLVVFNQLLLDRSVSTAGEKLGLTQPAVSNSLKRLRAALKDDLFLRTSKGMEPT) folds into the HTH lysR-type domain. The H-T-H motif DNA-binding region spans 23–42 (VSTAGEKLGLTQPAVSNSLK).

This sequence belongs to the LysR transcriptional regulatory family.

Its function is as follows. May regulate the expression of the naphthalene (nagA-F) and salicylate (nagG-M) metabolism genes. In Ralstonia sp, this protein is HTH-type transcriptional activator NagR.